Reading from the N-terminus, the 760-residue chain is Amyloid beta precursor protein binding family B member 2 (760 aa).

Residues Ser-123 and Ser-160 each carry the phosphoserine modification. Disordered stretches follow at residues Gln-177–Gly-295 and Pro-324–Trp-351. Composition is skewed to polar residues over residues Asn-212 to Pro-230 and Ser-261 to Pro-275. In terms of domain architecture, WW spans Pro-290–Ser-322. Phosphoserine is present on residues Ser-334, Ser-409, and Ser-412. PID domains lie at Asp-413–Asp-580 and Thr-586–Asn-738.

As to quaternary structure, interacts (via C-terminus) with APP (via C-terminus). Interacts with APLP2 (via cytoplasmic domain). In terms of tissue distribution, expressed in the brain, retinal lens and muscle cells (at protein level).

It localises to the endoplasmic reticulum. It is found in the golgi apparatus. Its subcellular location is the early endosome. Functionally, plays a role in the maintenance of lens transparency, and may also play a role in muscle cell strength. Involved in hippocampal neurite branching and neuromuscular junction formation, as a result plays a role in spatial memory functioning. Activates transcription of APP. This Mus musculus (Mouse) protein is Amyloid beta precursor protein binding family B member 2.